The following is a 114-amino-acid chain: Large ribosomal subunit protein bL19 (114 aa).

This sequence belongs to the bacterial ribosomal protein bL19 family.

Its function is as follows. This protein is located at the 30S-50S ribosomal subunit interface and may play a role in the structure and function of the aminoacyl-tRNA binding site. This chain is Large ribosomal subunit protein bL19, found in Halalkalibacterium halodurans (strain ATCC BAA-125 / DSM 18197 / FERM 7344 / JCM 9153 / C-125) (Bacillus halodurans).